Consider the following 305-residue polypeptide: Serine/threonine-protein phosphatase PP-X isozyme 1 (305 aa).

Mn(2+) contacts are provided by Asp-51, His-53, Asp-79, and Asn-111. The active-site Proton donor is His-112. Mn(2+) contacts are provided by His-161 and His-236.

This sequence belongs to the PPP phosphatase family. PP-4 (PP-X) subfamily. In terms of assembly, interacts with TAP46. Requires Mn(2+) as cofactor. In terms of tissue distribution, ubiquitous, mostly expressed in root mersitems, flowers, and vascular tissues.

The protein localises to the plastid stroma. The enzyme catalyses O-phospho-L-seryl-[protein] + H2O = L-seryl-[protein] + phosphate. The catalysed reaction is O-phospho-L-threonyl-[protein] + H2O = L-threonyl-[protein] + phosphate. The chain is Serine/threonine-protein phosphatase PP-X isozyme 1 (PPX1) from Arabidopsis thaliana (Mouse-ear cress).